The following is a 631-amino-acid chain: MSKVKIGELINTLVNEVEAIDASDRPQGDKTKRIKAAAARYKNALFNDKRKFRGKGLQKRITANTFNAYMSRARKRFDDKLHHSFDKNINKLSEKYPLYSEELSSWLSMPTANIRQHMSSLQSKLKEIMPLAEELSNVRIGSKGSDAKIARLIKKYPDWSFALSDLNSDDWKERRDYLYKLFQQGSALLEELHQLKVNHEVLYHLQLSPAERTSIQQRWADVLREKKRNVVVIDYPTYMQSIYDILNNPATLFSLNTRSGMAPLAFALAAVSGRRMIEIMFQGEFAVSGKYTVNFSGQAKKRSEDKSVTRTIYTLCEAKLFVELLTELRSCSAASDFDEVVKGYGKDDTRSENGRINAILAKAFNPWVKSFFGDDRRVYKDSRAIYARIAYEMFFRVDPRWKNVDEDVFFMEILGHDDENTQLHYKQFKLANFSRTWRPEVGDENTRLVALQKLDDEMPGFARGDAGVRLHETVKQLVEQDPSAKITNSTLRAFKFSPTMISRYLEFAADALGQFVGENGQWQLKIETPAIVLPDEESVETIDEPDDESQDDELDEDEIELDEGGGDEPTEEEGPEEHQPTALKPVFKPAKNNGDGTYKIEFEYDGKHYAWSGPADSPMAAMRSAWETYYS.

DNA-binding residues include Arg275, Lys300, Arg383, and His416. Tyr425 serves as the catalytic Nucleophile. The disordered stretch occupies residues 533 to 592 (LPDEESVETIDEPDDESQDDELDEDEIELDEGGGDEPTEEEGPEEHQPTALKPVFKPAKN). A compositionally biased stretch (acidic residues) spans 534–575 (PDEESVETIDEPDDESQDDELDEDEIELDEGGGDEPTEEEGP).

The protein belongs to the Caudoviricetes Protelomerase family. As to quaternary structure, monomer. Homodimer; in presence of DNA.

In terms of biological role, converts the circular intermediates produced by the viral replication and carrying a joined telomere site to a linear DNA molecule with covalently closed hairpin ends. The viral circular DNA is cleaved at a palindromic site called telRL thereby generating a linear prophage plasmid with telomeres. Binds covalently to the 3'-phosphoryl of the cleaved strands. This chain is Protelomerase, found in Escherichia coli (Bacteriophage N15).